The chain runs to 200 residues: NADH-quinone oxidoreductase subunit C (200 aa).

It belongs to the complex I 30 kDa subunit family. As to quaternary structure, NDH-1 is composed of 14 different subunits. Subunits NuoB, C, D, E, F, and G constitute the peripheral sector of the complex.

Its subcellular location is the cell inner membrane. It catalyses the reaction a quinone + NADH + 5 H(+)(in) = a quinol + NAD(+) + 4 H(+)(out). NDH-1 shuttles electrons from NADH, via FMN and iron-sulfur (Fe-S) centers, to quinones in the respiratory chain. The immediate electron acceptor for the enzyme in this species is believed to be ubiquinone. Couples the redox reaction to proton translocation (for every two electrons transferred, four hydrogen ions are translocated across the cytoplasmic membrane), and thus conserves the redox energy in a proton gradient. This Rhizobium etli (strain ATCC 51251 / DSM 11541 / JCM 21823 / NBRC 15573 / CFN 42) protein is NADH-quinone oxidoreductase subunit C.